The sequence spans 356 residues: Myricetin 7/4'-O-methyltransferase 2 (356 aa).

Asp-222 contacts S-adenosyl-L-methionine. Catalysis depends on His-260, which acts as the Proton acceptor.

Belongs to the class I-like SAM-binding methyltransferase superfamily. Cation-independent O-methyltransferase family. In terms of assembly, homodimer.

The catalysed reaction is quercetin + S-adenosyl-L-methionine = rhamnetin + S-adenosyl-L-homocysteine + H(+). It carries out the reaction kaempferol + S-adenosyl-L-methionine = kaempferide + S-adenosyl-L-homocysteine + H(+). It catalyses the reaction myricetin + S-adenosyl-L-methionine = 7-O-methylmyricetin + S-adenosyl-L-homocysteine + H(+). The enzyme catalyses kaempferide + S-adenosyl-L-methionine = 7,4'-O-dimethylkaempferol + S-adenosyl-L-homocysteine + H(+). The catalysed reaction is isorhamnetin + S-adenosyl-L-methionine = 3',4'-O-dimethylquercetin + S-adenosyl-L-homocysteine + 2 H(+). It carries out the reaction 3',4',5,7-tetrahydroxy-3-methoxyflavone + S-adenosyl-L-methionine = 3',4',5-trihydroxy-3,7-dimethoxyflavone + S-adenosyl-L-homocysteine + H(+). It catalyses the reaction rhamnetin + S-adenosyl-L-methionine = 7,4'-O-dimethylquercetin + S-adenosyl-L-homocysteine + H(+). The enzyme catalyses syringetin + S-adenosyl-L-methionine = 7,3',5'-O-trimethylmyricetin + S-adenosyl-L-homocysteine + H(+). The catalysed reaction is 3',4',5'-O-trimethylmyricetin + S-adenosyl-L-methionine = 7,3',4',5'-O-tetramethylmyricetin + S-adenosyl-L-homocysteine. Its pathway is flavonoid metabolism. Flavonoid 7/4'-O-methyltransferase involved in the biosynthesis of polymethoxylated flavonoids natural products such as myricetin derivatives, aroma compounds possessing antioxidant properties and exhibiting pharmacological activities such as anti-carcinogen, anti-viral, anti-thrombotic, anti-diabetic, anti-atherosclerotic, and anti-inflammatory effects. Catalyzes S-adenosylmethionine-dependent regioselective 7/4'-O-methylation of flavonoids; active on various hydroxylated flavonoid substrates. The chain is Myricetin 7/4'-O-methyltransferase 2 from Solanum lycopersicum (Tomato).